The following is a 418-amino-acid chain: UPF0261 protein BRA1168/BS1330_II1159 (418 aa).

The protein belongs to the UPF0261 family.

The protein is UPF0261 protein BRA1168/BS1330_II1159 of Brucella suis biovar 1 (strain 1330).